A 184-amino-acid chain; its full sequence is GMP synthase [glutamine-hydrolyzing] subunit A (184 aa).

Residues 3 to 184 (HIAVIDNHGQ…VFKNFIARCQ (182 aa)) form the Glutamine amidotransferase type-1 domain. C75 serves as the catalytic Nucleophile. Residues H163 and E165 contribute to the active site.

As to quaternary structure, heterodimer composed of a glutamine amidotransferase subunit (A) and a GMP-binding subunit (B).

It carries out the reaction XMP + L-glutamine + ATP + H2O = GMP + L-glutamate + AMP + diphosphate + 2 H(+). Its pathway is purine metabolism; GMP biosynthesis; GMP from XMP (L-Gln route): step 1/1. Catalyzes the synthesis of GMP from XMP. The sequence is that of GMP synthase [glutamine-hydrolyzing] subunit A from Haloquadratum walsbyi (strain DSM 16790 / HBSQ001).